A 289-amino-acid chain; its full sequence is Bidirectional sugar transporter SWEET11 (289 aa).

Residues 1–9 (MSLFNTENT) are Extracellular-facing. Residues 10–30 (WAFVFGLLGNLISFAVFLSPV) form a helical membrane-spanning segment. In terms of domain architecture, MtN3/slv 1 spans 12–98 (FVFGLLGNLI…SMFLAYAPKP (87 aa)). The Cytoplasmic segment spans residues 31-43 (PTFYRIWKKKTTE). The chain crosses the membrane as a helical span at residues 44-64 (GFQSIPYVVALFSATLWLYYA). At 65–70 (TQKKDV) the chain is on the extracellular side. A helical membrane pass occupies residues 71–91 (FLLVTINAFGCFIETIYISMF). The Cytoplasmic segment spans residues 92 to 105 (LAYAPKPARMLTVK). A helical membrane pass occupies residues 106–126 (MLLLMNFGGFCAILLLCQFLV). Residues 127 to 133 (KGATRAK) lie on the Extracellular side of the membrane. A helical membrane pass occupies residues 134–154 (IIGGICVGFSVCVFAAPLSII). Residues 134-218 (IIGGICVGFS…ILYVVYKYCK (85 aa)) form the MtN3/slv 2 domain. Topologically, residues 155–167 (RTVIKTRSVEYMP) are cytoplasmic. Residues 168–188 (FSLSLTLTISAVIWLLYGLAL) traverse the membrane as a helical segment. The Extracellular portion of the chain corresponds to 189–192 (KDIY). The helical transmembrane segment at 193-213 (VAFPNVLGFALGALQMILYVV) threads the bilayer. The Cytoplasmic portion of the chain corresponds to 214–289 (YKYCKTSPHL…GKQSSSAAAT (76 aa)). The interval 266–289 (DRRAEIEDGQTPKHGKQSSSAAAT) is disordered. Position 276 is a phosphothreonine (threonine 276).

Belongs to the SWEET sugar transporter family. As to quaternary structure, forms homooligomers and heterooligomers with SWEET1, SWEET3, SWEET5, SWEET6, SWEET7, SWEET8, SWEET9, SWEET12, SWEET13, SWEET15 and SWEET17. In terms of tissue distribution, expressed in leaves, especially in phloem. Expressed in developing seeds.

The protein localises to the cell membrane. In terms of biological role, mediates both low-affinity uptake and efflux of sugar across the plasma membrane. Involved in phloem loading by mediating export from parenchyma cells feeding H(+)-coupled import into the sieve element/companion cell complex, thus contributing to the sucrose migration from sites of synthesis in the mesophyll to the phloem. Contributes to seed filling by triggering sucrose efflux involved in the transfer of sugars from seed coat to embryos. This Arabidopsis thaliana (Mouse-ear cress) protein is Bidirectional sugar transporter SWEET11.